The primary structure comprises 208 residues: Protein-L-isoaspartate O-methyltransferase (208 aa).

Ser59 is a catalytic residue.

The protein belongs to the methyltransferase superfamily. L-isoaspartyl/D-aspartyl protein methyltransferase family.

The protein localises to the cytoplasm. The enzyme catalyses [protein]-L-isoaspartate + S-adenosyl-L-methionine = [protein]-L-isoaspartate alpha-methyl ester + S-adenosyl-L-homocysteine. In terms of biological role, catalyzes the methyl esterification of L-isoaspartyl residues in peptides and proteins that result from spontaneous decomposition of normal L-aspartyl and L-asparaginyl residues. It plays a role in the repair and/or degradation of damaged proteins. This chain is Protein-L-isoaspartate O-methyltransferase, found in Yersinia pseudotuberculosis serotype O:1b (strain IP 31758).